The primary structure comprises 149 residues: Mediator of RNA polymerase II transcription subunit 9 (149 aa).

The interval 18–64 is disordered; that stretch reads TNPTLDKPNAEATKEEFSSAENRDEKDYLTNQQPKNLSTPSTSSNGE. The segment covering 25 to 45 has biased composition (basic and acidic residues); it reads PNAEATKEEFSSAENRDEKDY. The segment covering 46 to 63 has biased composition (polar residues); sequence LTNQQPKNLSTPSTSSNG. Short sequence motifs (nuclear localization signal) lie at residues 77-99 and 136-149; these read RKDP…HRLK and KRDV…KLQR.

The protein belongs to the Mediator complex subunit 9 family. In terms of assembly, component of the Mediator complex, which is composed of at least 21 subunits that form three structurally distinct submodules. The Mediator head module contains MED6, MED8, MED11, SRB4/MED17, SRB5/MED18, ROX3/MED19, SRB2/MED20 and SRB6/MED22, the middle module contains MED1, MED4, NUT1/MED5, MED7, CSE2/MED9, NUT2/MED10, SRB7/MED21 and SOH1/MED31, and the tail module contains MED2, PGD1/MED3, RGR1/MED14, GAL11/MED15 and SIN4/MED16. The head and the middle modules interact directly with RNA polymerase II, whereas the elongated tail module interacts with gene-specific regulatory proteins. CSE2/MED9 interacts directly with MED4.

Its subcellular location is the nucleus. Component of the Mediator complex, a coactivator involved in the regulated transcription of nearly all RNA polymerase II-dependent genes. Mediator functions as a bridge to convey information from gene-specific regulatory proteins to the basal RNA polymerase II transcription machinery. The Mediator complex, having a compact conformation in its free form, is recruited to promoters by direct interactions with regulatory proteins and serves for the assembly of a functional preinitiation complex with RNA polymerase II and the general transcription factors. The Mediator complex unfolds to an extended conformation and partially surrounds RNA polymerase II, specifically interacting with the unphosphorylated form of the C-terminal domain (CTD) of RNA polymerase II. The Mediator complex dissociates from the RNA polymerase II holoenzyme and stays at the promoter when transcriptional elongation begins. In Saccharomyces cerevisiae (strain ATCC 204508 / S288c) (Baker's yeast), this protein is Mediator of RNA polymerase II transcription subunit 9 (CSE2).